A 267-amino-acid polypeptide reads, in one-letter code: Indole-3-glycerol phosphate synthase (267 aa).

Belongs to the TrpC family.

It catalyses the reaction 1-(2-carboxyphenylamino)-1-deoxy-D-ribulose 5-phosphate + H(+) = (1S,2R)-1-C-(indol-3-yl)glycerol 3-phosphate + CO2 + H2O. It functions in the pathway amino-acid biosynthesis; L-tryptophan biosynthesis; L-tryptophan from chorismate: step 4/5. This is Indole-3-glycerol phosphate synthase from Verminephrobacter eiseniae (strain EF01-2).